We begin with the raw amino-acid sequence, 182 residues long: MHLNKYSEVVERLENEEFEQVELGAEVYQQLLAIYLYQNKLADAKLLWMRVPANLRDDKELIQLNLLNIALQNNNYADFFKHIKYEWSERVKSPVEDLLNKQREELFKLMGSAYMSIYQHNLLELSLMSEDELKHACAALNWTEELDGDRVILKPKVQEAPPARGNDDQLLKLTEFVTFLEN.

Residues 1–167 enclose the PCI domain; sequence MHLNKYSEVV…QEAPPARGND (167 aa).

This sequence belongs to the CSN8 family. In terms of assembly, essential component of the CSN complex, probably composed of CSN1b, alien/CSN2, CSN3, CSN4, CSN5, CSN6, CSN7 and CSN8.

Its subcellular location is the cytoplasm. It is found in the nucleus. Functionally, probable component of the COP9 signalosome complex (CSN), a complex involved in various cellular and developmental processes. The CSN complex is an essential regulator of the ubiquitin (Ubl) conjugation pathway by mediating the deneddylation of the cullin subunits of the SCF-type E3 ligase complexes, leading to decrease the Ubl ligase activity of SCF. The CSN complex plays an essential role in oogenesis and embryogenesis and is required for proper photoreceptor R cell differentiation and promote lamina glial cell migration or axon targeting. It also promotes Ubl-dependent degradation of cyclin E (CycE) during early oogenesis. This chain is COP9 signalosome complex subunit 8 (CSN8), found in Drosophila melanogaster (Fruit fly).